A 252-amino-acid chain; its full sequence is Ditrans,polycis-undecaprenyl-diphosphate synthase ((2E,6E)-farnesyl-diphosphate specific) (252 aa).

Aspartate 24 is an active-site residue. Residue aspartate 24 coordinates Mg(2+). Residues 25 to 28 (GNGR), tryptophan 29, arginine 37, histidine 41, and 69 to 71 (SSE) each bind substrate. The Proton acceptor role is filled by asparagine 72. The substrate site is built by tryptophan 73, arginine 75, and arginine 192. Histidine 197 serves as a coordination point for Mg(2+). 198-200 (RIS) contributes to the substrate binding site. Glutamate 211 is a binding site for Mg(2+).

It belongs to the UPP synthase family. In terms of assembly, homodimer. Mg(2+) is required as a cofactor.

It carries out the reaction 8 isopentenyl diphosphate + (2E,6E)-farnesyl diphosphate = di-trans,octa-cis-undecaprenyl diphosphate + 8 diphosphate. Its function is as follows. Catalyzes the sequential condensation of isopentenyl diphosphate (IPP) with (2E,6E)-farnesyl diphosphate (E,E-FPP) to yield (2Z,6Z,10Z,14Z,18Z,22Z,26Z,30Z,34E,38E)-undecaprenyl diphosphate (di-trans,octa-cis-UPP). UPP is the precursor of glycosyl carrier lipid in the biosynthesis of bacterial cell wall polysaccharide components such as peptidoglycan and lipopolysaccharide. This Yersinia pestis protein is Ditrans,polycis-undecaprenyl-diphosphate synthase ((2E,6E)-farnesyl-diphosphate specific).